The following is a 262-amino-acid chain: Phosphonates import ATP-binding protein PhnC (262 aa).

Residues 5-253 (IRVEKLAKTF…RFDHLYRSIN (249 aa)) enclose the ABC transporter domain. ATP is bound at residue 37–44 (GPSGSGKS).

It belongs to the ABC transporter superfamily. Phosphonates importer (TC 3.A.1.9.1) family. In terms of assembly, the complex is composed of two ATP-binding proteins (PhnC), two transmembrane proteins (PhnE) and a solute-binding protein (PhnD).

It is found in the cell inner membrane. The enzyme catalyses phosphonate(out) + ATP + H2O = phosphonate(in) + ADP + phosphate + H(+). Its function is as follows. Part of the ABC transporter complex PhnCDE involved in phosphonates import. Responsible for energy coupling to the transport system. In Escherichia coli O6:H1 (strain CFT073 / ATCC 700928 / UPEC), this protein is Phosphonates import ATP-binding protein PhnC.